The primary structure comprises 378 residues: Outer membrane porin C (378 aa).

Positions 1-21 are cleaved as a signal peptide; sequence MKVKVLSLLVPALLVAGAANA.

It belongs to the Gram-negative porin family. In terms of assembly, homotrimer.

The protein localises to the cell outer membrane. Functionally, forms pores that allow passive diffusion of small molecules across the outer membrane. This Salmonella typhimurium (strain LT2 / SGSC1412 / ATCC 700720) protein is Outer membrane porin C (ompC).